A 765-amino-acid polypeptide reads, in one-letter code: Endothelin-converting enzyme 2 (765 aa).

Over 1–60 the chain is Cytoplasmic; that stretch reads MSVALQELGGGGNMVEYKRATLRDEDAPETPVEGGASPDAVEAGFRKRTSRLLGLHTQLE. The chain crosses the membrane as a helical; Signal-anchor for type II membrane protein span at residues 61-81; it reads LVLAGVSLLLAALLLGCLVAL. Residues 82 to 765 lie on the Lumenal side of the membrane; sequence GVQYHRDPSH…MNSGQLCEVW (684 aa). Positions 93–765 constitute a Peptidase M13 domain; that stretch reads TCLTEACIRV…MNSGQLCEVW (673 aa). 5 disulfides stabilise this stretch: C94-C99, C117-C750, C125-C710, C181-C430, and C639-C762. 7 N-linked (GlcNAc...) asparagine glycosylation sites follow: N161, N165, N206, N266, N311, N378, and N534. A Zn(2+)-binding site is contributed by H602. Residue E603 is part of the active site. H606 provides a ligand contact to Zn(2+). N-linked (GlcNAc...) asparagine glycosylation is found at N627 and N635. E662 provides a ligand contact to Zn(2+). D666 (proton donor) is an active-site residue.

The protein belongs to the peptidase M13 family. Zn(2+) is required as a cofactor. Isoform ECE2-1 and isoform ECE2-2 are expressed in brain and adrenal gland.

The protein localises to the golgi apparatus membrane. It is found in the cytoplasmic vesicle. It localises to the secretory vesicle membrane. The enzyme catalyses Hydrolysis of the 21-Trp-|-Val-22 bond in big endothelin to form endothelin 1.. In terms of biological role, converts big endothelin-1 to endothelin-1. Also involved in the processing of various neuroendocrine peptides, including neurotensin, angiotensin I, substance P, proenkephalin-derived peptides, and prodynorphin-derived peptides. May play a role in amyloid-beta processing. The sequence is that of Endothelin-converting enzyme 2 from Bos taurus (Bovine).